The chain runs to 418 residues: Tyrosine--tRNA ligase 1 (418 aa).

Residue tyrosine 34 participates in L-tyrosine binding. The 'HIGH' region motif lies at 39–48; sequence PTADSLHIGH. L-tyrosine is bound by residues tyrosine 169 and glutamine 173. The short motif at 230–234 is the 'KMSKS' region element; the sequence is KFGKT. Lysine 233 is an ATP binding site. The S4 RNA-binding domain occupies 352-418; that stretch reads TVLIDLLVES…GKKKYFLIRY (67 aa).

The protein belongs to the class-I aminoacyl-tRNA synthetase family. TyrS type 1 subfamily. Homodimer.

Its subcellular location is the cytoplasm. It carries out the reaction tRNA(Tyr) + L-tyrosine + ATP = L-tyrosyl-tRNA(Tyr) + AMP + diphosphate + H(+). In terms of biological role, catalyzes the attachment of tyrosine to tRNA(Tyr) in a two-step reaction: tyrosine is first activated by ATP to form Tyr-AMP and then transferred to the acceptor end of tRNA(Tyr). This chain is Tyrosine--tRNA ligase 1, found in Bacillus cereus (strain ATCC 10987 / NRS 248).